Consider the following 393-residue polypeptide: uncharacterized protein (393 aa).

Residues 6-47 (KYDNKCAIHKEHKIKMICATCKDVVCNECILLDHNGHKFGRI) form a B box-type zinc finger. The Zn(2+) site is built by cysteine 11, histidine 14, cysteine 34, and histidine 39.

This is an uncharacterized protein from Dictyostelium discoideum (Social amoeba).